A 345-amino-acid chain; its full sequence is GTP 3',8-cyclase (345 aa).

Residues 10-236 enclose the Radical SAM core domain; it reads SHGRPLGVLR…QCVSSHWPLD (227 aa). Arg19 lines the GTP pocket. 2 residues coordinate [4Fe-4S] cluster: Cys26 and Cys30. S-adenosyl-L-methionine is bound at residue Tyr32. Cys33 serves as a coordination point for [4Fe-4S] cluster. Arg65 contacts GTP. Gly69 contacts S-adenosyl-L-methionine. Residue Thr98 coordinates GTP. Ser123 serves as a coordination point for S-adenosyl-L-methionine. Lys172 contacts GTP. Met206 is an S-adenosyl-L-methionine binding site. [4Fe-4S] cluster contacts are provided by Cys269 and Cys272. 274–276 is a binding site for GTP; the sequence is RIR. [4Fe-4S] cluster is bound at residue Cys286.

Belongs to the radical SAM superfamily. MoaA family. In terms of assembly, monomer and homodimer. [4Fe-4S] cluster is required as a cofactor.

It carries out the reaction GTP + AH2 + S-adenosyl-L-methionine = (8S)-3',8-cyclo-7,8-dihydroguanosine 5'-triphosphate + 5'-deoxyadenosine + L-methionine + A + H(+). It participates in cofactor biosynthesis; molybdopterin biosynthesis. Catalyzes the cyclization of GTP to (8S)-3',8-cyclo-7,8-dihydroguanosine 5'-triphosphate. The chain is GTP 3',8-cyclase from Synechococcus sp. (strain CC9902).